Here is a 313-residue protein sequence, read N- to C-terminus: Porphobilinogen deaminase (313 aa).

C242 bears the S-(dipyrrolylmethanemethyl)cysteine mark.

This sequence belongs to the HMBS family. Monomer. The cofactor is dipyrromethane.

It carries out the reaction 4 porphobilinogen + H2O = hydroxymethylbilane + 4 NH4(+). It participates in porphyrin-containing compound metabolism; protoporphyrin-IX biosynthesis; coproporphyrinogen-III from 5-aminolevulinate: step 2/4. Its function is as follows. Tetrapolymerization of the monopyrrole PBG into the hydroxymethylbilane pre-uroporphyrinogen in several discrete steps. The polypeptide is Porphobilinogen deaminase (Pseudomonas fluorescens (strain Pf0-1)).